The chain runs to 570 residues: Urease subunit alpha (570 aa).

A Urease domain is found at 132-570 (GGIDTHVHFI…LPMAQRYFLF (439 aa)). Ni(2+)-binding residues include H137 and H139. H139 and A170 together coordinate substrate. Position 220 (K220) interacts with Ni(2+). Position 220 is an N6-carboxylysine (K220). Residues H222 and H249 each coordinate substrate. The Ni(2+) site is built by H249 and H275. Residue H323 is the Proton donor of the active site. A Ni(2+)-binding site is contributed by D363. Substrate is bound at residue A366.

This sequence belongs to the metallo-dependent hydrolases superfamily. Urease alpha subunit family. As to quaternary structure, heterotrimer of UreA (gamma), UreB (beta) and UreC (alpha) subunits. Three heterotrimers associate to form the active enzyme. It depends on Ni cation as a cofactor. In terms of processing, carboxylation allows a single lysine to coordinate two nickel ions.

It is found in the cytoplasm. It catalyses the reaction urea + 2 H2O + H(+) = hydrogencarbonate + 2 NH4(+). It functions in the pathway nitrogen metabolism; urea degradation; CO(2) and NH(3) from urea (urease route): step 1/1. Its activity is regulated as follows. Inhibited by fluoride. The chain is Urease subunit alpha from Sporosarcina pasteurii (Bacillus pasteurii).